A 387-amino-acid polypeptide reads, in one-letter code: MGGGGRMSTVITSNNSEKKGGSSHLKRAPHTKPPFTLGDLKRAIPPHCFERSFVRSFSYVAYDVCLSFLFYSIATNFFPYISSPLSYVAWLVYWLFQGCILTGLWVIGHECGHHAFSEYQLADDIVGLIVHSALLVPYFSWKYSHRRHHSNIGSLERDEVFVPKSKSKISWYSKYLNNPPGRVLTLAATLLLGWPLYLAFNVSGRPYDRFACHYDPYGPIFSERERLQIYIADLGIFATTFVLYQATMAKGLAWVMRIYGVPLLIVNCFLVMITYLQHTHPAIPRYGSSEWDWLRGAMVTVDRDYGVLNKVFHNIADTHVAHHLFATVPHYHAMEATKAIKPIMGEYYRYDGTPFYKALWREAKECLFVEPDEGAPTQGVFWYRNKY.

A disordered region spans residues 1 to 34 (MGGGGRMSTVITSNNSEKKGGSSHLKRAPHTKPP). Transmembrane regions (helical) follow at residues 61–81 (AYDVCLSFLFYSIATNFFPYI) and 88–108 (VAWLVYWLFQGCILTGLWVIG). Residues 109 to 113 (HECGH) carry the Histidine box-1 motif. A helical membrane pass occupies residues 121-141 (LADDIVGLIVHSALLVPYFSW). A Histidine box-2 motif is present at residues 145-149 (HRRHH). Helical transmembrane passes span 183-203 (VLTLAATLLLGWPLYLAFNVS), 229-249 (IYIADLGIFATTFVLYQATMA), and 253-273 (AWVMRIYGVPLLIVNCFLVMI). Residues 319 to 323 (HVAHH) carry the Histidine box-3 motif.

It belongs to the fatty acid desaturase type 1 family. As to expression, expressed in seeds. Barely detected in leaves.

Its subcellular location is the microsome membrane. The catalysed reaction is a 1-acyl-2-(9Z)-octadecenoyl-sn-glycero-3-phosphocholine + 2 Fe(II)-[cytochrome b5] + O2 + 2 H(+) = a 1-acyl-2-[(R)-12-hydroxyoleoyl]-sn-glycero-3-phosphocholine + 2 Fe(III)-[cytochrome b5] + H2O. It functions in the pathway lipid metabolism; monounsaturated fatty acid biosynthesis. Inhibited by oleoyloxyethyl phosphocholine. Oleoyl-12-hydroxylase involved in the biosynthesis of ricinoleate (12-hydroxy-cis-9-octadecenoate), the major fatty acid constituent of the oil seeds from castor bean plants. Catalyzes the hydroxylation at the 12-position of 1-acyl-2-oleoyl-sn-glycero-3-phosphocholine (2-oleoyl-PC), which seems to be the actual physiological subtrate. It uses cytochrome b5 as an electron donor. May also be involved in the production of lesquerolic acid (14-hydroxyeicos-cis-ll-enoic acid) in vitro. The sequence is that of Oleoyl-12-hydroxylase FAH12 from Ricinus communis (Castor bean).